We begin with the raw amino-acid sequence, 252 residues long: Cilia- and flagella-associated protein 300 (252 aa).

The protein belongs to the CFAP300 family.

The protein resides in the cytoplasm. The protein localises to the cytoskeleton. It localises to the cilium axoneme. Functionally, cilium- and flagellum-specific protein that plays a role in axonemal structure organization and motility. Plays a role in outer and inner axonemal dynein arm assembly. In Paramecium tetraurelia, this protein is Cilia- and flagella-associated protein 300.